The chain runs to 387 residues: Large ribosomal subunit protein uL3 (387 aa).

This sequence belongs to the universal ribosomal protein uL3 family.

It is found in the cytoplasm. The chain is Large ribosomal subunit protein uL3 (RPL3) from Eremothecium gossypii (strain ATCC 10895 / CBS 109.51 / FGSC 9923 / NRRL Y-1056) (Yeast).